A 149-amino-acid chain; its full sequence is Ribonuclease pancreatic (149 aa).

The first 25 residues, 1-25, serve as a signal peptide directing secretion; sequence MGLEKSLILLPLLVLVLAWVQPSLG. Lys-32 and Arg-35 together coordinate substrate. His-37 (proton acceptor) is an active-site residue. 4 disulfide bridges follow: Cys-51-Cys-109, Cys-65-Cys-120, Cys-83-Cys-135, and Cys-90-Cys-97. Residue 66-70 participates in substrate binding; that stretch reads KRVNT. An N-linked (GlcNAc...) asparagine glycan is attached at Asn-87. The substrate site is built by Lys-91 and Arg-110. Residue His-144 is the Proton donor of the active site.

The protein belongs to the pancreatic ribonuclease family. As to quaternary structure, monomer. Interacts with and forms tight 1:1 complexes with RNH1. Dimerization of two such complexes may occur. Interaction with RNH1 inhibits this protein. In terms of tissue distribution, pancreas.

It is found in the secreted. The catalysed reaction is an [RNA] containing cytidine + H2O = an [RNA]-3'-cytidine-3'-phosphate + a 5'-hydroxy-ribonucleotide-3'-[RNA].. It carries out the reaction an [RNA] containing uridine + H2O = an [RNA]-3'-uridine-3'-phosphate + a 5'-hydroxy-ribonucleotide-3'-[RNA].. Endonuclease that catalyzes the cleavage of RNA on the 3' side of pyrimidine nucleotides. Acts on single-stranded and double-stranded RNA. The chain is Ribonuclease pancreatic (RNASE1) from Acomys cahirinus (Cairo spiny mouse).